The following is a 360-amino-acid chain: Peptide chain release factor 1 (360 aa).

Position 237 is an N5-methylglutamine (Q237).

It belongs to the prokaryotic/mitochondrial release factor family. In terms of processing, methylated by PrmC. Methylation increases the termination efficiency of RF1.

It is found in the cytoplasm. Peptide chain release factor 1 directs the termination of translation in response to the peptide chain termination codons UAG and UAA. The protein is Peptide chain release factor 1 of Pseudomonas putida (strain ATCC 700007 / DSM 6899 / JCM 31910 / BCRC 17059 / LMG 24140 / F1).